Here is a 511-residue protein sequence, read N- to C-terminus: Piperic acid synthase CYP719A37 (511 aa).

Residues 7 to 27 (VDPALFSAFVSIIFFFLGMFL) traverse the membrane as a helical segment. Cysteine 455 is a heme binding site.

The protein belongs to the cytochrome P450 family. The cofactor is heme. As to expression, specifically expressed in immature fruits and roots. Barely detectable in young leaves and flowering spadices.

Its subcellular location is the membrane. The protein localises to the endoplasmic reticulum membrane. The catalysed reaction is (E,E)-feruperate + reduced [NADPH--hemoprotein reductase] + O2 = (E,E)-piperate + oxidized [NADPH--hemoprotein reductase] + 2 H2O + H(+). The protein operates within aromatic compound metabolism. Functionally, cytochrome P450 monooxygenase involved in the biosynthesis of aromatic piperamides natural products such as piperine (1-piperoyl-piperidine), the pungent principle contributing, together with several terpenoids, to the aromatic properties of black pepper fruits, and displaying numerous pharmacological activities such as antiproliferative, antitumor, antiangiogenesis, antioxidant, antidiabetic, antiobesity, cardioprotective, antimicrobial, antiaging, and immunomodulatory effects. Catalyzes the conversion of feruperic acid (5-(4-hydroxy-3-methoxyphenyl)-2,4-pentadienoic acid) to piperic acid. Inactive toward ferulic acid and feruperine. The sequence is that of Piperic acid synthase CYP719A37 from Piper nigrum (Black pepper).